A 256-amino-acid polypeptide reads, in one-letter code: Thioredoxin-dependent peroxide reductase, mitochondrial (256 aa).

The transit peptide at 1–61 (MAAAVGRLLR…KLFSTSSSYH (61 aa)) directs the protein to the mitochondrion. Positions 63 to 221 (PAVTQHAPYF…TLRLVKAFQY (159 aa)) constitute a Thioredoxin domain. N6-succinyllysine is present on lysine 83. Position 91 is an N6-acetyllysine; alternate (lysine 91). Lysine 91 bears the N6-succinyllysine; alternate mark. Catalysis depends on cysteine 108, which acts as the Cysteine sulfenic acid (-SOH) intermediate. Threonine 146 carries the phosphothreonine modification.

It belongs to the peroxiredoxin family. AhpC/Prx1 subfamily. Homodimer; disulfide-linked, upon oxidation. 6 homodimers assemble to form a ring-like dodecamer. Interacts with NEK6. Interacts with LRRK2. Interacts with MAP3K13. Interacts with RPS6KC1 (via PX domain). Post-translationally, phosphorylated by LRRK2; phosphorylation reduces perodixase activity. In terms of processing, the enzyme can be inactivated by further oxidation of the cysteine sulfenic acid (C(P)-SOH) to sulphinic acid (C(P)-SO2H) and sulphonic acid (C(P)-SO3H) instead of its condensation to a disulfide bond. S-palmitoylated.

Its subcellular location is the mitochondrion. It is found in the cytoplasm. It localises to the early endosome. It carries out the reaction a hydroperoxide + [thioredoxin]-dithiol = an alcohol + [thioredoxin]-disulfide + H2O. Thiol-specific peroxidase that catalyzes the reduction of hydrogen peroxide and organic hydroperoxides to water and alcohols, respectively. Plays a role in cell protection against oxidative stress by detoxifying peroxides. Acts synergistically with MAP3K13 to regulate the activation of NF-kappa-B in the cytosol. Required for the maintenance of physical strength. The chain is Thioredoxin-dependent peroxide reductase, mitochondrial (PRDX3) from Pongo abelii (Sumatran orangutan).